We begin with the raw amino-acid sequence, 232 residues long: Ion-translocating oxidoreductase complex subunit E (232 aa).

The next 6 membrane-spanning stretches (helical) occupy residues 18–38 (GLVQ…ITNA), 39–59 (LGLG…VSLV), 69–89 (IPVF…LINA), 93–113 (GLYL…IIIG), 127–147 (AAFD…VLGA), and 182–202 (PFLL…LIAL).

This sequence belongs to the NqrDE/RnfAE family. The complex is composed of six subunits: RnfA, RnfB, RnfC, RnfD, RnfE and RnfG.

It localises to the cell inner membrane. Its function is as follows. Part of a membrane-bound complex that couples electron transfer with translocation of ions across the membrane. The chain is Ion-translocating oxidoreductase complex subunit E from Shewanella baltica (strain OS185).